The sequence spans 368 residues: Metacaspase-6 (368 aa).

Residues His-86 and Cys-139 contribute to the active site. Cys-139 carries the post-translational modification S-nitrosocysteine. Residues 153–174 (GESTKKKKDSGDSSTINKETEA) form a disordered region.

Belongs to the peptidase C14B family. Post-translationally, proteolytically processed; by an autocatalytic mechanism. Expressed in roots and flower buds.

The sequence is that of Metacaspase-6 (AMC6) from Arabidopsis thaliana (Mouse-ear cress).